Consider the following 340-residue polypeptide: Phosphoribosylformylglycinamidine cyclo-ligase (340 aa).

Belongs to the AIR synthase family.

It localises to the cytoplasm. It catalyses the reaction 2-formamido-N(1)-(5-O-phospho-beta-D-ribosyl)acetamidine + ATP = 5-amino-1-(5-phospho-beta-D-ribosyl)imidazole + ADP + phosphate + H(+). Its pathway is purine metabolism; IMP biosynthesis via de novo pathway; 5-amino-1-(5-phospho-D-ribosyl)imidazole from N(2)-formyl-N(1)-(5-phospho-D-ribosyl)glycinamide: step 2/2. The chain is Phosphoribosylformylglycinamidine cyclo-ligase from Streptococcus pneumoniae serotype 4 (strain ATCC BAA-334 / TIGR4).